Here is a 77-residue protein sequence, read N- to C-terminus: Putative defensin-like protein 60 (77 aa).

The signal sequence occupies residues 1–25; sequence MKMNITKSYVILFLVVVMTNSLSNS. 4 disulfide bridges follow: Cys41–Cys75, Cys45–Cys68, Cys54–Cys73, and Cys58–Cys74.

The protein belongs to the DEFL family.

It is found in the secreted. This Arabidopsis thaliana (Mouse-ear cress) protein is Putative defensin-like protein 60.